The primary structure comprises 1368 residues: DNA-directed RNA polymerase subunit beta (1368 aa).

Belongs to the RNA polymerase beta chain family. As to quaternary structure, the RNAP catalytic core consists of 2 alpha, 1 beta, 1 beta' and 1 omega subunit. When a sigma factor is associated with the core the holoenzyme is formed, which can initiate transcription.

The enzyme catalyses RNA(n) + a ribonucleoside 5'-triphosphate = RNA(n+1) + diphosphate. Its function is as follows. DNA-dependent RNA polymerase catalyzes the transcription of DNA into RNA using the four ribonucleoside triphosphates as substrates. The protein is DNA-directed RNA polymerase subunit beta of Janthinobacterium sp. (strain Marseille) (Minibacterium massiliensis).